The chain runs to 249 residues: U2 small nuclear ribonucleoprotein A' (249 aa).

4 LRR repeats span residues Lys20–Glu41, Gln43–Asn64, Arg65–Leu87, and Lys89–Ala110. The 39-residue stretch at Asn123–Leu161 folds into the LRRCT domain.

The protein belongs to the U2 small nuclear ribonucleoprotein A family.

The protein resides in the nucleus. The protein localises to the nucleus speckle. Functionally, this protein is associated with sn-RNP U2. It helps the A' protein to bind stem loop IV of U2 snRNA. This chain is U2 small nuclear ribonucleoprotein A', found in Arabidopsis thaliana (Mouse-ear cress).